Here is a 368-residue protein sequence, read N- to C-terminus: MRSVKLFGLAALGSLGAAAPAPSRVSDLTKRSSTCTFTAASQATESASGCSEIVLDNIEVPAGETLDLSDVDDGTTIVFEGTTTFGYKEWSGPLIRFGGKDITIKQNSGAVIDGEGSRWWDGEGTNGGKTKPKFMYAHSLEDSTITGLSIKNTPVQAISVQATNLYLIDITIDNSDGDDNGGHNTDGFDISESTGVYIRGATVKNQDDCIAINSGENIEFSGGTCSGGHGLSIGSVGGRDDNTVKNVTITDSTVTDSANGVRIKTVYDATGSVSQVTYSNIKLSGITDYGIVIEQDYENGSPTGTPTTGVPITDLTIDGVTGTVESDAVEVYILCGDGSCSDWTWEGVDITGGEKSSKCENVPSGASC.

The N-terminal stretch at 1–18 (MRSVKLFGLAALGSLGAA) is a signal peptide. A propeptide spanning residues 19-31 (APAPSRVSDLTKR) is cleaved from the precursor. C35 and C50 form a disulfide bridge. 7 PbH1 repeats span residues 140 to 162 (LEDSTITGLSIKNTPVQAISVQA), 167 to 192 (LIDITIDNSDGDDNGGHNTDGFDISE), 193 to 214 (STGVYIRGATVKNQDDCIAINS), 215 to 235 (GENIEFSGGTCSGGHGLSIGS), 244 to 265 (VKNVTITDSTVTDSANGVRIKT), 273 to 295 (VSQVTYSNIKLSGITDYGIVIEQ), and 307 to 352 (TTGV…DITG). The Proton donor role is filled by D207. A disulfide bond links C209 and C225. H229 is a catalytic residue. N-linked (GlcNAc...) asparagine glycosylation occurs at N246. 2 cysteine pairs are disulfide-bonded: C335-C340 and C359-C368.

This sequence belongs to the glycosyl hydrolase 28 family.

The protein resides in the secreted. The catalysed reaction is (1,4-alpha-D-galacturonosyl)n+m + H2O = (1,4-alpha-D-galacturonosyl)n + (1,4-alpha-D-galacturonosyl)m.. In terms of biological role, involved in maceration and soft-rotting of plant tissue. Hydrolyzes the 1,4-alpha glycosidic bonds of de-esterified pectate in the smooth region of the plant cell wall. This Aspergillus fumigatus (strain CBS 144.89 / FGSC A1163 / CEA10) (Neosartorya fumigata) protein is Probable endopolygalacturonase A (pgaA).